Consider the following 233-residue polypeptide: Large ribosomal subunit protein uL1 (233 aa).

The protein belongs to the universal ribosomal protein uL1 family. As to quaternary structure, part of the 50S ribosomal subunit.

Its function is as follows. Binds directly to 23S rRNA. The L1 stalk is quite mobile in the ribosome, and is involved in E site tRNA release. In terms of biological role, protein L1 is also a translational repressor protein, it controls the translation of the L11 operon by binding to its mRNA. The protein is Large ribosomal subunit protein uL1 of Thermotoga sp. (strain RQ2).